Reading from the N-terminus, the 394-residue chain is Elongation factor Tu (394 aa).

The tr-type G domain maps to 10 to 204 (KPHVNVGTIG…AVDSYIPQPE (195 aa)). Positions 19-26 (GHVDHGKT) are G1. Residue 19 to 26 (GHVDHGKT) participates in GTP binding. T26 contributes to the Mg(2+) binding site. Residues 60–64 (GITIS) form a G2 region. Positions 81-84 (DCPG) are G3. GTP is bound by residues 81–85 (DCPGH) and 136–139 (NKCD). Positions 136–139 (NKCD) are G4. Residues 174–176 (SAV) form a G5 region.

This sequence belongs to the TRAFAC class translation factor GTPase superfamily. Classic translation factor GTPase family. EF-Tu/EF-1A subfamily. Monomer.

The protein resides in the cytoplasm. It catalyses the reaction GTP + H2O = GDP + phosphate + H(+). GTP hydrolase that promotes the GTP-dependent binding of aminoacyl-tRNA to the A-site of ribosomes during protein biosynthesis. The chain is Elongation factor Tu from Akkermansia muciniphila (strain ATCC BAA-835 / DSM 22959 / JCM 33894 / BCRC 81048 / CCUG 64013 / CIP 107961 / Muc).